The chain runs to 446 residues: Probable glucan endo-1,3-beta-glucosidase eglC (446 aa).

The first 18 residues, 1–18 (MQFTHLVALALALATSEA), serve as a signal peptide directing secretion. E128 functions as the Proton donor in the catalytic mechanism. N183 carries an N-linked (GlcNAc...) asparagine glycan. E239 functions as the Nucleophile in the catalytic mechanism. N364 and N370 each carry an N-linked (GlcNAc...) asparagine glycan. The tract at residues 393–416 (SSGAGASGASGQSSSSTGSSSAPS) is disordered. The span at 401 to 416 (ASGQSSSSTGSSSAPS) shows a compositional bias: low complexity. N423 carries the GPI-anchor amidated asparagine lipid modification. Residues 424-446 (AASGLSGSIFGAVVAVCLALAAL) constitute a propeptide, removed in mature form.

The protein belongs to the glycosyl hydrolase 17 family. In terms of processing, the GPI-anchor is attached to the protein in the endoplasmic reticulum and serves to target the protein to the cell surface. There, the glucosamine-inositol phospholipid moiety is cleaved off and the GPI-modified mannoprotein is covalently attached via its lipidless GPI glycan remnant to the 1,6-beta-glucan of the outer cell wall layer.

Its subcellular location is the cell membrane. It localises to the secreted. It is found in the cell wall. It catalyses the reaction Hydrolysis of (1-&gt;3)-beta-D-glucosidic linkages in (1-&gt;3)-beta-D-glucans.. Its function is as follows. Glucanases play a role in cell expansion during growth, in cell-cell fusion during mating, and in spore release during sporulation. This enzyme may be involved in beta-glucan degradation and also function biosynthetically as a transglycosylase. The chain is Probable glucan endo-1,3-beta-glucosidase eglC (eglC) from Aspergillus fumigatus (strain ATCC MYA-4609 / CBS 101355 / FGSC A1100 / Af293) (Neosartorya fumigata).